We begin with the raw amino-acid sequence, 68 residues long: MKLQLMICLVLLPCFFCEPDEICRARMTNKEFTYKSNVCNGCGDQVAACEAECFRNDVYTACHEAQKG.

Positions M1–C17 are cleaved as a signal peptide. 3 disulfide bridges follow: C23–C53, C39–C49, and C42–C62. K67 is subject to Lysine amide.

The protein belongs to the helical arthropod-neuropeptide-derived (HAND) family. In terms of tissue distribution, expressed by the venom gland.

It localises to the secreted. Toxin that paralyzes insects. May have a direct effect on the insect central nervous system. This is U1-agatoxin-Ta1c from Eratigena agrestis (Hobo spider).